A 249-amino-acid chain; its full sequence is NAD(P)H-quinone oxidoreductase subunit K 2 (249 aa).

[4Fe-4S] cluster contacts are provided by cysteine 54, cysteine 55, cysteine 119, and cysteine 150.

It belongs to the complex I 20 kDa subunit family. NDH-1 can be composed of about 15 different subunits; different subcomplexes with different compositions have been identified which probably have different functions. [4Fe-4S] cluster is required as a cofactor.

It is found in the cell inner membrane. It carries out the reaction a plastoquinone + NADH + (n+1) H(+)(in) = a plastoquinol + NAD(+) + n H(+)(out). The enzyme catalyses a plastoquinone + NADPH + (n+1) H(+)(in) = a plastoquinol + NADP(+) + n H(+)(out). NDH-1 shuttles electrons from an unknown electron donor, via FMN and iron-sulfur (Fe-S) centers, to quinones in the respiratory and/or the photosynthetic chain. The immediate electron acceptor for the enzyme in this species is believed to be plastoquinone. Couples the redox reaction to proton translocation, and thus conserves the redox energy in a proton gradient. Cyanobacterial NDH-1 also plays a role in inorganic carbon-concentration. The chain is NAD(P)H-quinone oxidoreductase subunit K 2 from Gloeobacter violaceus (strain ATCC 29082 / PCC 7421).